A 71-amino-acid polypeptide reads, in one-letter code: Small ribosomal subunit protein bS21 (71 aa).

Residues 48–71 are disordered; that stretch reads ENATLAKRHAKRNARENARNTRLY. Basic and acidic residues predominate over residues 60-71; it reads NARENARNTRLY.

Belongs to the bacterial ribosomal protein bS21 family.

The protein is Small ribosomal subunit protein bS21 of Haemophilus influenzae (strain 86-028NP).